The chain runs to 793 residues: Probable phosphoketolase 2 (793 aa).

It belongs to the XFP family. It depends on thiamine diphosphate as a cofactor.

This chain is Probable phosphoketolase 2, found in Nostoc sp. (strain PCC 7120 / SAG 25.82 / UTEX 2576).